Reading from the N-terminus, the 377-residue chain is Chaperone protein DnaJ (377 aa).

The 66-residue stretch at 4–69 folds into the J domain; that stretch reads DYYEALGVTR…QKRAAYDRFG (66 aa). The segment at 135–213 adopts a CR-type zinc-finger fold; the sequence is GKTAQIRVPT…CHGQGRVTQE (79 aa). Cys148, Cys151, Cys165, Cys168, Cys187, Cys190, Cys201, and Cys204 together coordinate Zn(2+). CXXCXGXG motif repeat units follow at residues 148-155, 165-172, 187-194, and 201-208; these read CDECSGSG, CTMCSGSG, CPGCNGRG, and CEKCHGQG.

It belongs to the DnaJ family. In terms of assembly, homodimer. Requires Zn(2+) as cofactor.

It is found in the cytoplasm. In terms of biological role, participates actively in the response to hyperosmotic and heat shock by preventing the aggregation of stress-denatured proteins and by disaggregating proteins, also in an autonomous, DnaK-independent fashion. Unfolded proteins bind initially to DnaJ; upon interaction with the DnaJ-bound protein, DnaK hydrolyzes its bound ATP, resulting in the formation of a stable complex. GrpE releases ADP from DnaK; ATP binding to DnaK triggers the release of the substrate protein, thus completing the reaction cycle. Several rounds of ATP-dependent interactions between DnaJ, DnaK and GrpE are required for fully efficient folding. Also involved, together with DnaK and GrpE, in the DNA replication of plasmids through activation of initiation proteins. The sequence is that of Chaperone protein DnaJ from Brucella ovis (strain ATCC 25840 / 63/290 / NCTC 10512).